A 560-amino-acid chain; its full sequence is Membrane protein insertase YidC (560 aa).

A helical membrane pass occupies residues 7–27 (ILIVALAIVSYVMVLKWNQDY). The interval 43-72 (APAIPDTPLGNNASASADVPSANGETSAPL) is disordered. 4 helical membrane-spanning segments follow: residues 367–387 (IVGN…GIFF), 437–457 (LGGC…YWVL), 468–488 (FMLW…PIIM), and 515–535 (PIIF…YWVV).

Belongs to the OXA1/ALB3/YidC family. Type 1 subfamily. Interacts with the Sec translocase complex via SecD. Specifically interacts with transmembrane segments of nascent integral membrane proteins during membrane integration.

Its subcellular location is the cell inner membrane. Functionally, required for the insertion and/or proper folding and/or complex formation of integral membrane proteins into the membrane. Involved in integration of membrane proteins that insert both dependently and independently of the Sec translocase complex, as well as at least some lipoproteins. Aids folding of multispanning membrane proteins. This chain is Membrane protein insertase YidC, found in Pseudomonas fluorescens (strain SBW25).